A 408-amino-acid chain; its full sequence is Zinc chaperone AztD (408 aa).

The N-terminal stretch at 1-21 (MLRHLAGASALALTLAGAGFA) is a signal peptide. An N-terminal Zn(2+)-binding motif; binds a third Zn(2+) with low affinity motif is present at residues 23–29 (DHDHDHE). Residues H99, H102, D104, H124, H167, H218, and H408 each coordinate Zn(2+). Cysteines 214 and 231 form a disulfide.

As to quaternary structure, monomer.

It is found in the periplasm. In terms of biological role, acts as a zinc chaperone in the AztABCD zinc transport system. Directly transfers one zinc cation to the solute binding protein AztC; the transfer occurs without the formation of a stable interaction. Binds 3 Zn(2+), two with high affinity and one with low affinity, and transfers only Zn(2+) bound to site 2 to AztC. Likely functions to store zinc in the periplasm and may be important for zinc accumulation in zinc-limited environments. The polypeptide is Zinc chaperone AztD (Paracoccus denitrificans (strain Pd 1222)).